The chain runs to 730 residues: Ribosomal RNA large subunit methyltransferase K/L (730 aa).

The region spanning 46 to 157 (TAYRLCLWSR…RGEAILSLDL (112 aa)) is the THUMP domain.

The protein belongs to the methyltransferase superfamily. RlmKL family.

The protein localises to the cytoplasm. It catalyses the reaction guanosine(2445) in 23S rRNA + S-adenosyl-L-methionine = N(2)-methylguanosine(2445) in 23S rRNA + S-adenosyl-L-homocysteine + H(+). The enzyme catalyses guanosine(2069) in 23S rRNA + S-adenosyl-L-methionine = N(2)-methylguanosine(2069) in 23S rRNA + S-adenosyl-L-homocysteine + H(+). Functionally, specifically methylates the guanine in position 2445 (m2G2445) and the guanine in position 2069 (m7G2069) of 23S rRNA. This Pseudomonas putida (strain W619) protein is Ribosomal RNA large subunit methyltransferase K/L.